Consider the following 676-residue polypeptide: DNA ligase (676 aa).

NAD(+) is bound by residues 34 to 38, 83 to 84, and Glu-117; these read DQEFD and SL. Lys-119 acts as the N6-AMP-lysine intermediate in catalysis. Residues Arg-140, Glu-177, Lys-285, and Lys-309 each contribute to the NAD(+) site. Cys-403, Cys-406, Cys-427, and Cys-434 together coordinate Zn(2+). The BRCT domain occupies 595-676; sequence NNNGLLKNKT…EWLKMLNKSG (82 aa).

The protein belongs to the NAD-dependent DNA ligase family. LigA subfamily. Mg(2+) is required as a cofactor. Requires Mn(2+) as cofactor.

The enzyme catalyses NAD(+) + (deoxyribonucleotide)n-3'-hydroxyl + 5'-phospho-(deoxyribonucleotide)m = (deoxyribonucleotide)n+m + AMP + beta-nicotinamide D-nucleotide.. In terms of biological role, DNA ligase that catalyzes the formation of phosphodiester linkages between 5'-phosphoryl and 3'-hydroxyl groups in double-stranded DNA using NAD as a coenzyme and as the energy source for the reaction. It is essential for DNA replication and repair of damaged DNA. This chain is DNA ligase, found in Pelagibacter ubique (strain HTCC1062).